A 326-amino-acid chain; its full sequence is N-acetyl-gamma-glutamyl-phosphate reductase (326 aa).

The active site involves Cys-155.

This sequence belongs to the NAGSA dehydrogenase family. Type 1 subfamily.

Its subcellular location is the cytoplasm. The enzyme catalyses N-acetyl-L-glutamate 5-semialdehyde + phosphate + NADP(+) = N-acetyl-L-glutamyl 5-phosphate + NADPH + H(+). Its pathway is amino-acid biosynthesis; L-arginine biosynthesis; N(2)-acetyl-L-ornithine from L-glutamate: step 3/4. Functionally, catalyzes the NADPH-dependent reduction of N-acetyl-5-glutamyl phosphate to yield N-acetyl-L-glutamate 5-semialdehyde. This is N-acetyl-gamma-glutamyl-phosphate reductase from Shewanella baltica (strain OS195).